The sequence spans 454 residues: Bifunctional protein GlmU (454 aa).

The segment at 1–226 is pyrophosphorylase; the sequence is MSLEIVILAA…AMEVQGVNDR (226 aa). UDP-N-acetyl-alpha-D-glucosamine-binding positions include 8–11, Lys22, Gln73, 78–79, 99–101, Gly136, Glu151, Asn166, and Asn224; these read LAAG, GT, and YGD. Asp101 serves as a coordination point for Mg(2+). Asn224 provides a ligand contact to Mg(2+). Residues 227-247 form a linker region; it reads MQQAQLERHYQRLRAEELMRQ. The interval 248 to 454 is N-acetyltransferase; it reads GVTLLDPQRL…NWKRPEKIKK (207 aa). Residues Arg330 and Lys348 each contribute to the UDP-N-acetyl-alpha-D-glucosamine site. The Proton acceptor role is filled by His360. Residues Tyr363 and Asn374 each coordinate UDP-N-acetyl-alpha-D-glucosamine. Residues Ala377, 383-384, Ser402, Ala420, and Arg437 each bind acetyl-CoA; that span reads NY.

This sequence in the N-terminal section; belongs to the N-acetylglucosamine-1-phosphate uridyltransferase family. The protein in the C-terminal section; belongs to the transferase hexapeptide repeat family. In terms of assembly, homotrimer. It depends on Mg(2+) as a cofactor.

The protein localises to the cytoplasm. The catalysed reaction is alpha-D-glucosamine 1-phosphate + acetyl-CoA = N-acetyl-alpha-D-glucosamine 1-phosphate + CoA + H(+). It carries out the reaction N-acetyl-alpha-D-glucosamine 1-phosphate + UTP + H(+) = UDP-N-acetyl-alpha-D-glucosamine + diphosphate. It functions in the pathway nucleotide-sugar biosynthesis; UDP-N-acetyl-alpha-D-glucosamine biosynthesis; N-acetyl-alpha-D-glucosamine 1-phosphate from alpha-D-glucosamine 6-phosphate (route II): step 2/2. It participates in nucleotide-sugar biosynthesis; UDP-N-acetyl-alpha-D-glucosamine biosynthesis; UDP-N-acetyl-alpha-D-glucosamine from N-acetyl-alpha-D-glucosamine 1-phosphate: step 1/1. Its pathway is bacterial outer membrane biogenesis; LPS lipid A biosynthesis. In terms of biological role, catalyzes the last two sequential reactions in the de novo biosynthetic pathway for UDP-N-acetylglucosamine (UDP-GlcNAc). The C-terminal domain catalyzes the transfer of acetyl group from acetyl coenzyme A to glucosamine-1-phosphate (GlcN-1-P) to produce N-acetylglucosamine-1-phosphate (GlcNAc-1-P), which is converted into UDP-GlcNAc by the transfer of uridine 5-monophosphate (from uridine 5-triphosphate), a reaction catalyzed by the N-terminal domain. This is Bifunctional protein GlmU from Pseudomonas aeruginosa (strain ATCC 15692 / DSM 22644 / CIP 104116 / JCM 14847 / LMG 12228 / 1C / PRS 101 / PAO1).